The sequence spans 333 residues: Fructose-1,6-bisphosphatase class 1 (333 aa).

Residues Glu89, Asp110, Leu112, and Asp113 each contribute to the Mg(2+) site. Substrate-binding positions include 113-116 (DGSS), Asn206, Tyr239, 257-259 (YLY), and Lys269. Glu275 provides a ligand contact to Mg(2+).

Belongs to the FBPase class 1 family. Homotetramer. The cofactor is Mg(2+).

The protein resides in the cytoplasm. The catalysed reaction is beta-D-fructose 1,6-bisphosphate + H2O = beta-D-fructose 6-phosphate + phosphate. It functions in the pathway carbohydrate biosynthesis; gluconeogenesis. In Sodalis glossinidius (strain morsitans), this protein is Fructose-1,6-bisphosphatase class 1.